The following is a 111-amino-acid chain: Putative lipid-binding protein AIR1 (111 aa).

The signal sequence occupies residues Met1–Ala23. 3 cysteine pairs are disulfide-bonded: Cys28-Cys58, Cys38-Cys57, and Cys74-Cys110.

The protein belongs to the plant LTP family. PEARLI1 subfamily.

The protein localises to the secreted. This is Putative lipid-binding protein AIR1 (AIR1) from Arabidopsis thaliana (Mouse-ear cress).